The following is a 157-amino-acid chain: UPF0178 protein Nwi_2152 (157 aa).

Belongs to the UPF0178 family.

The polypeptide is UPF0178 protein Nwi_2152 (Nitrobacter winogradskyi (strain ATCC 25391 / DSM 10237 / CIP 104748 / NCIMB 11846 / Nb-255)).